Here is a 384-residue protein sequence, read N- to C-terminus: S-adenosylmethionine synthase (384 aa).

ATP is bound at residue His-15. A Mg(2+)-binding site is contributed by Asp-17. Residue Glu-43 participates in K(+) binding. The L-methionine site is built by Glu-56 and Gln-99. A flexible loop region spans residues Gln-99–Arg-109. ATP-binding positions include Asp-164–Lys-166, Arg-231–Phe-232, Asp-240, Arg-246–Lys-247, Ala-263, and Lys-267. Asp-240 provides a ligand contact to L-methionine. Residue Lys-271 participates in L-methionine binding.

This sequence belongs to the AdoMet synthase family. As to quaternary structure, homotetramer; dimer of dimers. Mg(2+) serves as cofactor. K(+) is required as a cofactor.

The protein localises to the cytoplasm. It carries out the reaction L-methionine + ATP + H2O = S-adenosyl-L-methionine + phosphate + diphosphate. It participates in amino-acid biosynthesis; S-adenosyl-L-methionine biosynthesis; S-adenosyl-L-methionine from L-methionine: step 1/1. Catalyzes the formation of S-adenosylmethionine (AdoMet) from methionine and ATP. The overall synthetic reaction is composed of two sequential steps, AdoMet formation and the subsequent tripolyphosphate hydrolysis which occurs prior to release of AdoMet from the enzyme. This is S-adenosylmethionine synthase from Shewanella pealeana (strain ATCC 700345 / ANG-SQ1).